Here is a 177-residue protein sequence, read N- to C-terminus: Superoxide dismutase [Cu-Zn] 1 (177 aa).

The N-terminal stretch at 1-20 (MKYTILSLVAGALISCSAMA) is a signal peptide. 3 residues coordinate Cu cation: histidine 69, histidine 71, and histidine 94. The cysteines at positions 76 and 172 are disulfide-linked. Zn(2+)-binding residues include histidine 94, histidine 103, histidine 112, and aspartate 115. Cu cation is bound at residue histidine 150.

It belongs to the Cu-Zn superoxide dismutase family. Monomer. Cu cation is required as a cofactor. Zn(2+) serves as cofactor.

The protein localises to the periplasm. The catalysed reaction is 2 superoxide + 2 H(+) = H2O2 + O2. Functionally, destroys radicals which are normally produced within the cells and which are toxic to biological systems. This is Superoxide dismutase [Cu-Zn] 1 (sodC1) from Salmonella typhimurium (strain 4/74).